The following is a 276-amino-acid chain: 3-keto-5-aminohexanoate cleavage enzyme (276 aa).

(5S)-5-amino-3-oxohexanoate is bound at residue glutamate 14. The Zn(2+) site is built by histidine 46 and histidine 48. The (5S)-5-amino-3-oxohexanoate site is built by serine 82, glycine 85, threonine 106, and asparagine 108. Glutamate 230 contributes to the Zn(2+) binding site.

This sequence belongs to the BKACE family. Kce subfamily. As to quaternary structure, homotetramer. Zn(2+) is required as a cofactor.

The enzyme catalyses (5S)-5-amino-3-oxohexanoate + acetyl-CoA = (3S)-3-aminobutanoyl-CoA + acetoacetate. It participates in amino-acid degradation; L-lysine degradation via acetate pathway. Functionally, involved in the anaerobic fermentation of lysine. Catalyzes the reversible reaction between 3-keto-5-aminohexanoate (KAH) and acetyl-CoA to form 3-aminobutyryl-CoA and acetoacetate. The reaction involves the deprotonation of KAH, the nucleophilic addition onto acetyl-CoA and the intramolecular transfer of the CoA moiety. This is 3-keto-5-aminohexanoate cleavage enzyme from Cloacimonas acidaminovorans (strain Evry).